The chain runs to 382 residues: MSVLRRMMRVSNRSLLAFIFFFSLSSSCLYFIYVAPGIANTYLFMVQARGIMLRENVKTIGHMIRLYTNKNSTLNGTDYPEGNNSSDYLVQTTTYLPENFTYSPYLPCPEKLPYMRGFLNVNVSEVSFDEIHQLFSKDLDIEPGGHWRPKDCKPRWKVAVLIPFRNRHEHLPIFFLHLIPMLQKQRLEFAFYVIEQTGTQPFNRAMLFNVGFKEAMKDSVWDCVIFHDVDHLPENDRNYYGCGEMPRHFAAKLDKYMYILPYKEFFGGVSGLTVEQFRKINGFPNAFWGWGGEDDDLWNRVHYAGYNVTRPEGDLGKYKSIPHHHRGEVQFLGRYKLLRYSKERQYIDGLNNLIYRPKILVDRLYTNISVNLMPELAPIEDY.

Residues Met-1–Ser-14 lie on the Cytoplasmic side of the membrane. A helical; Signal-anchor for type II membrane protein membrane pass occupies residues Leu-15–Ala-35. Residues Pro-36–Tyr-382 are Lumenal-facing. N-linked (GlcNAc...) asparagine glycans are attached at residues Asn-71, Asn-75, Asn-83, Asn-84, Asn-99, and Asn-122. The cysteines at positions 108 and 152 are disulfide-linked. Residues Pro-163–Arg-167, Phe-202–Arg-204, Val-229–Asp-230, Tyr-258, and Trp-290 each bind UDP-alpha-D-galactose. Cys-223 and Cys-242 are disulfide-bonded. Position 230 (Asp-230) interacts with Mn(2+). Gly-292–Asp-295 serves as a coordination point for N-acetyl-D-glucosamine. An N-linked (GlcNAc...) asparagine glycan is attached at Asn-307. His-323 provides a ligand contact to Mn(2+). His-323–His-324 contacts UDP-alpha-D-galactose. Arg-334 contributes to the N-acetyl-D-glucosamine binding site. Asn-367 is a glycosylation site (N-linked (GlcNAc...) asparagine).

The protein belongs to the glycosyltransferase 7 family. Mn(2+) is required as a cofactor. Mg(2+) serves as cofactor. In terms of tissue distribution, high expression in brain and adrenal gland, lower in liver, lung, colon and peripheral white blood cells.

It is found in the golgi apparatus. The protein localises to the golgi stack membrane. It catalyses the reaction a beta-D-glucosyl-(1&lt;-&gt;1')-N-acylsphing-4-enine + UDP-alpha-D-galactose = a beta-D-Gal-(1-&gt;4)-beta-D-Glc-(1&lt;-&gt;1)-Cer(d18:1(4E)) + UDP + H(+). It participates in protein modification; protein glycosylation. Its pathway is sphingolipid metabolism. Inhibited by EDTA. Catalyzes the synthesis of lactosylceramide (LacCer) via the transfer of galactose from UDP-galactose to glucosylceramide (GlcCer). LacCer is the starting point in the biosynthesis of all gangliosides (membrane-bound glycosphingolipids) which play pivotal roles in the CNS including neuronal maturation and axonal and myelin formation. The protein is Beta-1,4-galactosyltransferase 6 of Homo sapiens (Human).